A 334-amino-acid polypeptide reads, in one-letter code: Nucleoid-associated protein YejK (334 aa).

Belongs to the YejK family.

It localises to the cytoplasm. The protein resides in the nucleoid. The sequence is that of Nucleoid-associated protein YejK from Escherichia fergusonii (strain ATCC 35469 / DSM 13698 / CCUG 18766 / IAM 14443 / JCM 21226 / LMG 7866 / NBRC 102419 / NCTC 12128 / CDC 0568-73).